Reading from the N-terminus, the 317-residue chain is Adenosine receptor A3 (317 aa).

Residues 1–14 (MPVNSTAVSWTSVT) lie on the Extracellular side of the membrane. Residue asparagine 4 is glycosylated (N-linked (GlcNAc...) asparagine). Residues 15–37 (YITVEILIGLCAIVGNVLVIWVV) traverse the membrane as a helical segment. Over 38–48 (KLNPSLQTTTF) the chain is Cytoplasmic. A helical transmembrane segment spans residues 49-72 (YFIVSLALADIAVGVLVMPLAIVI). Residues 73 to 84 (SLGVTIHFYSCL) lie on the Extracellular side of the membrane. The cysteines at positions 83 and 165 are disulfide-linked. The chain crosses the membrane as a helical span at residues 85-106 (FMTCLMLIFTHASIMSLLAIAV). Topologically, residues 107–126 (DRYLRVKLTVRYRRVTTQRR) are cytoplasmic. Residues 127-148 (IWLALGLCWLVSFLVGLTPMFG) form a helical membrane-spanning segment. Topologically, residues 149–176 (WNMKLSSADENLTFLPCRFRSVMRMDYM) are extracellular. N-linked (GlcNAc...) asparagine glycosylation is present at asparagine 159. A helical membrane pass occupies residues 177–197 (VYFSFFLWILVPLVVMCAIYF). The Cytoplasmic segment spans residues 198–230 (DIFYIIRNRLSQSFSGSRETGAFYGREFKTAKS). Residues 231–254 (LLLVLFLFALCWLPLSIINCILYF) form a helical membrane-spanning segment. Topologically, residues 255-260 (DGQVPQ) are extracellular. A helical membrane pass occupies residues 261-283 (TVLYLGILLSHANSMMNPIVYAY). Topologically, residues 284 to 317 (KIKKFKETYLLILKACVMCQPSKSMDPSTEQTSE) are cytoplasmic. The S-palmitoyl cysteine moiety is linked to residue cysteine 302.

The protein belongs to the G-protein coupled receptor 1 family. In terms of processing, phosphorylation on Thr-315 and Ser-316 may be crucial for rapid desensitization. Phosphorylation on Thr-315 may be necessary for phosphorylation on Ser-316 to occur. Most abundant in lung, spleen and pineal gland. Moderate expression in brain, kidney and testis.

It is found in the cell membrane. Its function is as follows. Receptor for adenosine. The activity of this receptor is mediated by G proteins which inhibits adenylyl cyclase. The polypeptide is Adenosine receptor A3 (ADORA3) (Ovis aries (Sheep)).